Consider the following 86-residue polypeptide: BolA-like protein 2 (86 aa).

M1 is modified (N-acetylmethionine).

It belongs to the BolA/IbaG family. Interacts with GLRX3; forms a heterotrimeric complex composed by two BOLA2 molecules and one GLRX3 molecule; linked by [2Fe-2S] clusters.

The protein resides in the cytoplasm. The protein localises to the nucleus. Acts as a cytosolic iron-sulfur (Fe-S) cluster assembly factor that facilitates [2Fe-2S] cluster insertion into a subset of cytosolic proteins. Acts together with the monothiol glutaredoxin GLRX3. This Mus musculus (Mouse) protein is BolA-like protein 2 (Bola2).